The sequence spans 627 residues: (+)-3-carene synthase 1, chloroplastic (627 aa).

A chloroplast-targeting transit peptide spans 1 to 36; the sequence is MSVISIVPLASKPCLYKSFISSTHEPKALRRPISTV. Positions 378, 382, and 530 each coordinate Mg(2+). A DDXXD motif motif is present at residues 378–382; the sequence is DDMYD.

This sequence belongs to the terpene synthase family. Tpsd subfamily. Mg(2+) serves as cofactor. Requires Mn(2+) as cofactor.

Its subcellular location is the plastid. It is found in the chloroplast. The enzyme catalyses (2E)-geranyl diphosphate = (+)-car-3-ene + diphosphate. It functions in the pathway terpene metabolism; oleoresin biosynthesis. Functionally, terpene synthase (TPS) involved in the biosynthesis of monoterpene natural products included in conifer oleoresin secretions and volatile emissions; these compounds contribute to biotic and abiotic stress defense against herbivores (e.g. insect attack by white pine weevil P.strobi) and pathogens. Catalyzes the conversion of (2E)-geranyl diphosphate (GPP) to (+)-car-3-ene. The protein is (+)-3-carene synthase 1, chloroplastic of Picea sitchensis (Sitka spruce).